The sequence spans 403 residues: GPI-N-acetylgalactosamine transferase PGAP4 (403 aa).

Residues 1 to 22 are Cytoplasmic-facing; it reads MTTSTSPAAMLLRRLRRLSWGS. A helical membrane pass occupies residues 23–43; sequence TAVQLFILTVVTFGLLAPLAC. Residues 44–264 are Lumenal-facing; that stretch reads HRLLHSYFYL…INPEPMRILE (221 aa). A UDP-N-acetyl-alpha-D-galactosamine-binding site is contributed by Val-109. Disulfide bonds link Cys-132–Cys-136 and Cys-144–Cys-194. The short motif at 211–213 is the DXD motif element; the sequence is EDD. A helical membrane pass occupies residues 265–285; the sequence is WVGVGMLLGPVLTWIYMRFAC. Residues 286 to 287 are Cytoplasmic-facing; the sequence is RP. Residues 288 to 308 form a helical membrane-spanning segment; the sequence is GFSWPVMLFFCLYSMGLVELV. Residues 309-403 are Lumenal-facing; it reads GRHYFLELRR…LRYNFHPSLL (95 aa). Cys-332 and Cys-333 are oxidised to a cystine. Residues Thr-334, Pro-335, and Lys-362 each contribute to the UDP-N-acetyl-alpha-D-galactosamine site.

This sequence belongs to the PGAP4 family. Glycosylated.

It is found in the golgi apparatus membrane. Functionally, golgi-resident glycosylphosphatidylinositol (GPI)-N-acetylgalactosamine transferase that catalyzes the N-acetyl-beta-D-galactosamine transfer from an UDP-N-acetyl-alpha-D-galactosamine to the 4-OH-position of first mannose of the glycosylphosphatidylinositol (GPI) of a GPI-anchored protein (GPI-AP). This modification occurs after the fatty acid remodeling step of the GPI-anchor maturation. This chain is GPI-N-acetylgalactosamine transferase PGAP4, found in Mus musculus (Mouse).